A 423-amino-acid chain; its full sequence is Serine hydroxymethyltransferase (423 aa).

Residues leucine 125 and 129–131 contribute to the (6S)-5,6,7,8-tetrahydrofolate site; that span reads GHL. Lysine 234 carries the post-translational modification N6-(pyridoxal phosphate)lysine. A (6S)-5,6,7,8-tetrahydrofolate-binding site is contributed by glutamate 249.

The protein belongs to the SHMT family. As to quaternary structure, homodimer. It depends on pyridoxal 5'-phosphate as a cofactor.

It is found in the cytoplasm. The enzyme catalyses (6R)-5,10-methylene-5,6,7,8-tetrahydrofolate + glycine + H2O = (6S)-5,6,7,8-tetrahydrofolate + L-serine. Its pathway is one-carbon metabolism; tetrahydrofolate interconversion. It functions in the pathway amino-acid biosynthesis; glycine biosynthesis; glycine from L-serine: step 1/1. Its function is as follows. Catalyzes the reversible interconversion of serine and glycine with tetrahydrofolate (THF) serving as the one-carbon carrier. This reaction serves as the major source of one-carbon groups required for the biosynthesis of purines, thymidylate, methionine, and other important biomolecules. Also exhibits THF-independent aldolase activity toward beta-hydroxyamino acids, producing glycine and aldehydes, via a retro-aldol mechanism. The protein is Serine hydroxymethyltransferase of Thermobifida fusca (strain YX).